Consider the following 822-residue polypeptide: Calpain-3 (822 aa).

The interval 1 to 36 (MPTVISASVAPRTGAEPMSPGPIAQAAQDKGTEAGG) is disordered. A Calpain catalytic domain is found at 74 to 418 (LFVDPEFPPD…FTKLEICNLT (345 aa)). Catalysis depends on residues C129, H335, and N359. The domain III stretch occupies residues 419 to 587 (ADALESDKLQ…KRNLSEEVEN (169 aa)). The tract at residues 588–650 (TISVDRPVKK…EPGNTDQESE (63 aa)) is linker. The tract at residues 604 to 652 (IFVSDRANSNKELGVDQETEEGKDNTSPDKQAKSPQLEPGNTDQESEEQ) is disordered. Over residues 623 to 635 (EEGKDNTSPDKQA) the composition is skewed to basic and acidic residues. EF-hand domains follow at residues 650-684 (EEQR…VVNK), 693-726 (FTLE…KKIK), 723-758 (KKIK…AGFH), and 788-822 (VRLE…TMYA). The domain IV stretch occupies residues 651–822 (EQRQFRNIFR…LEWLQLTMYA (172 aa)). The Ca(2+) site is built by A663, D666, E668, E673, D706, D708, S710, R712, E717, D736, D738, S740, T742, E747, D801, D803, D805, and I807.

It belongs to the peptidase C2 family. In terms of assembly, homodimer; via EF-hand domain 4. Interacts with TTN/titin. Interacts with CMYA5; this interaction, which results in CMYA5 proteolysis, may protect CAPN3 from autolysis. Interacts with SIMC1. Interacts with UTP25; the interaction is required for CAPN3 translocation to the nucleolus. In terms of tissue distribution, skeletal muscle.

Its subcellular location is the cytoplasm. It localises to the nucleus. It is found in the nucleolus. The enzyme catalyses Broad endopeptidase activity.. Its activity is regulated as follows. Activated by micromolar concentrations of calcium and inhibited by calpastatin. Calcium-regulated non-lysosomal thiol-protease. Proteolytically cleaves CTBP1. Mediates, with UTP25, the proteasome-independent degradation of p53/TP53. The sequence is that of Calpain-3 (CAPN3) from Bos taurus (Bovine).